A 138-amino-acid chain; its full sequence is NADH dehydrogenase [ubiquinone] 1 alpha subcomplex subunit N7BM (138 aa).

This sequence belongs to the complex I NDUFA12 subunit family. As to quaternary structure, complex I is composed of 42 different subunits.

Its subcellular location is the mitochondrion inner membrane. Functionally, accessory subunit of the mitochondrial membrane respiratory chain NADH dehydrogenase (Complex I), that is believed not to be involved in catalysis. Complex I functions in the transfer of electrons from NADH to the respiratory chain. The immediate electron acceptor for the enzyme is believed to be ubiquinone. This chain is NADH dehydrogenase [ubiquinone] 1 alpha subcomplex subunit N7BM, found in Yarrowia lipolytica (strain CLIB 122 / E 150) (Yeast).